Here is a 473-residue protein sequence, read N- to C-terminus: Aspartyl/glutamyl-tRNA(Asn/Gln) amidotransferase subunit B (473 aa).

It belongs to the GatB/GatE family. GatB subfamily. Heterotrimer of A, B and C subunits.

The enzyme catalyses L-glutamyl-tRNA(Gln) + L-glutamine + ATP + H2O = L-glutaminyl-tRNA(Gln) + L-glutamate + ADP + phosphate + H(+). It carries out the reaction L-aspartyl-tRNA(Asn) + L-glutamine + ATP + H2O = L-asparaginyl-tRNA(Asn) + L-glutamate + ADP + phosphate + 2 H(+). In terms of biological role, allows the formation of correctly charged Asn-tRNA(Asn) or Gln-tRNA(Gln) through the transamidation of misacylated Asp-tRNA(Asn) or Glu-tRNA(Gln) in organisms which lack either or both of asparaginyl-tRNA or glutaminyl-tRNA synthetases. The reaction takes place in the presence of glutamine and ATP through an activated phospho-Asp-tRNA(Asn) or phospho-Glu-tRNA(Gln). The sequence is that of Aspartyl/glutamyl-tRNA(Asn/Gln) amidotransferase subunit B from Francisella tularensis subsp. mediasiatica (strain FSC147).